The chain runs to 381 residues: Dual-specificity RNA methyltransferase RlmN (381 aa).

Catalysis depends on Glu96, which acts as the Proton acceptor. The Radical SAM core domain maps to 102–342 (TDDRGTLCVS…TRTTRGDDID (241 aa)). Cys109 and Cys345 are disulfide-bonded. [4Fe-4S] cluster is bound by residues Cys116, Cys120, and Cys123. Residues 170 to 171 (GE), Ser202, 224 to 226 (SLH), and Asn302 each bind S-adenosyl-L-methionine. The S-methylcysteine intermediate role is filled by Cys345.

It belongs to the radical SAM superfamily. RlmN family. It depends on [4Fe-4S] cluster as a cofactor.

It is found in the cytoplasm. It catalyses the reaction adenosine(2503) in 23S rRNA + 2 reduced [2Fe-2S]-[ferredoxin] + 2 S-adenosyl-L-methionine = 2-methyladenosine(2503) in 23S rRNA + 5'-deoxyadenosine + L-methionine + 2 oxidized [2Fe-2S]-[ferredoxin] + S-adenosyl-L-homocysteine. The catalysed reaction is adenosine(37) in tRNA + 2 reduced [2Fe-2S]-[ferredoxin] + 2 S-adenosyl-L-methionine = 2-methyladenosine(37) in tRNA + 5'-deoxyadenosine + L-methionine + 2 oxidized [2Fe-2S]-[ferredoxin] + S-adenosyl-L-homocysteine. Functionally, specifically methylates position 2 of adenine 2503 in 23S rRNA and position 2 of adenine 37 in tRNAs. m2A2503 modification seems to play a crucial role in the proofreading step occurring at the peptidyl transferase center and thus would serve to optimize ribosomal fidelity. This chain is Dual-specificity RNA methyltransferase RlmN, found in Pseudomonas putida (strain GB-1).